The chain runs to 372 residues: Queuine tRNA-ribosyltransferase (372 aa).

D92 acts as the Proton acceptor in catalysis. Substrate-binding positions include 92–96 (DSGGY), D146, Q188, and G215. An RNA binding region spans residues 246–252 (GIGSLRE). D265 functions as the Nucleophile in the catalytic mechanism. The RNA binding; important for wobble base 34 recognition stretch occupies residues 270–274 (TRLGR). Residues C303, C305, C308, and H334 each contribute to the Zn(2+) site.

This sequence belongs to the queuine tRNA-ribosyltransferase family. In terms of assembly, homodimer. Within each dimer, one monomer is responsible for RNA recognition and catalysis, while the other monomer binds to the replacement base PreQ1. It depends on Zn(2+) as a cofactor.

The catalysed reaction is 7-aminomethyl-7-carbaguanine + guanosine(34) in tRNA = 7-aminomethyl-7-carbaguanosine(34) in tRNA + guanine. It functions in the pathway tRNA modification; tRNA-queuosine biosynthesis. Functionally, catalyzes the base-exchange of a guanine (G) residue with the queuine precursor 7-aminomethyl-7-deazaguanine (PreQ1) at position 34 (anticodon wobble position) in tRNAs with GU(N) anticodons (tRNA-Asp, -Asn, -His and -Tyr). Catalysis occurs through a double-displacement mechanism. The nucleophile active site attacks the C1' of nucleotide 34 to detach the guanine base from the RNA, forming a covalent enzyme-RNA intermediate. The proton acceptor active site deprotonates the incoming PreQ1, allowing a nucleophilic attack on the C1' of the ribose to form the product. After dissociation, two additional enzymatic reactions on the tRNA convert PreQ1 to queuine (Q), resulting in the hypermodified nucleoside queuosine (7-(((4,5-cis-dihydroxy-2-cyclopenten-1-yl)amino)methyl)-7-deazaguanosine). This Prochlorococcus marinus (strain MIT 9211) protein is Queuine tRNA-ribosyltransferase.